A 140-amino-acid polypeptide reads, in one-letter code: Large ribosomal subunit protein uL16c (140 aa).

The protein belongs to the universal ribosomal protein uL16 family. As to quaternary structure, part of the 50S ribosomal subunit.

It localises to the plastid. The protein resides in the chloroplast. In Cyanidium caldarium (Red alga), this protein is Large ribosomal subunit protein uL16c.